The primary structure comprises 215 residues: Cytochrome b6 (215 aa).

The chain crosses the membrane as a helical span at residues 32–52; the sequence is IFYCIGGIVFTSFLIQVASGF. C35 contacts heme c. Positions 86 and 100 each coordinate heme b. Helical transmembrane passes span 90-110, 116-136, and 186-206; these read ASMM…TGGF, LTWV…VTGY, and LHTF…FLMI. Residues H187 and H202 each coordinate heme b.

It belongs to the cytochrome b family. PetB subfamily. In terms of assembly, the 4 large subunits of the cytochrome b6-f complex are cytochrome b6, subunit IV (17 kDa polypeptide, PetD), cytochrome f and the Rieske protein, while the 4 small subunits are PetG, PetL, PetM and PetN. The complex functions as a dimer. It depends on heme b as a cofactor. Requires heme c as cofactor.

It is found in the plastid. The protein localises to the chloroplast thylakoid membrane. Its function is as follows. Component of the cytochrome b6-f complex, which mediates electron transfer between photosystem II (PSII) and photosystem I (PSI), cyclic electron flow around PSI, and state transitions. This Gracilaria tenuistipitata var. liui (Red alga) protein is Cytochrome b6.